A 675-amino-acid polypeptide reads, in one-letter code: 1,4-alpha-glucan branching enzyme TK1436 (675 aa).

Residue E183 is the Nucleophile of the active site. Residues R261 and G278 each coordinate substrate. D354 acts as the Proton donor in catalysis. 3 residues coordinate substrate: W407, D467, and Q476. 2 disordered regions span residues 537–563 and 581–627; these read PELE…KVLT and EETR…LSIK. Basic and acidic residues-rich tracts occupy residues 549–563 and 581–595; these read PPEK…KVLT and EETR…EASK. Positions 596 to 616 are enriched in basic residues; that stretch reads RGKRKSSKSKRLPRKVSKKAP.

This sequence belongs to the glycosyl hydrolase 57 family. As to quaternary structure, monomer.

The catalysed reaction is Transfers a segment of a (1-&gt;4)-alpha-D-glucan chain to a primary hydroxy group in a similar glucan chain.. In terms of biological role, catalyzes the formation of branch points in alpha-glucans by cleavage of an alpha-1,4 glycosidic bond and subsequent transfer of the cleaved-off oligosaccharide to a new alpha-1,6 position. The branch chain-length distribution of the reaction products shows degree of polymerization (DP) of 5 to 30, with two local maxima at DP 6 and DP 11. Exhibits an alpha-retaining catalytic mechanism. Does not display alpha-galactosidase or pullulanase activity, since melibiose and pullulan are not substrates. Is not able to catalyze the hydrolysis or transglycosylation of maltoheptaose, suggesting that the TK1436 protein contains neither alpha-amylase nor 4-alpha-glucanotransferase activity. In Thermococcus kodakarensis (strain ATCC BAA-918 / JCM 12380 / KOD1) (Pyrococcus kodakaraensis (strain KOD1)), this protein is 1,4-alpha-glucan branching enzyme TK1436.